We begin with the raw amino-acid sequence, 156 residues long: 2-C-methyl-D-erythritol 2,4-cyclodiphosphate synthase (156 aa).

2 residues coordinate a divalent metal cation: Asp9 and His11. 4-CDP-2-C-methyl-D-erythritol 2-phosphate-binding positions include Asp9–His11 and His36–Ser37. His44 is a binding site for a divalent metal cation. A 4-CDP-2-C-methyl-D-erythritol 2-phosphate-binding site is contributed by Asn58–Gly60.

Belongs to the IspF family. In terms of assembly, homotrimer. It depends on a divalent metal cation as a cofactor.

The catalysed reaction is 4-CDP-2-C-methyl-D-erythritol 2-phosphate = 2-C-methyl-D-erythritol 2,4-cyclic diphosphate + CMP. Its pathway is isoprenoid biosynthesis; isopentenyl diphosphate biosynthesis via DXP pathway; isopentenyl diphosphate from 1-deoxy-D-xylulose 5-phosphate: step 4/6. Involved in the biosynthesis of isopentenyl diphosphate (IPP) and dimethylallyl diphosphate (DMAPP), two major building blocks of isoprenoid compounds. Catalyzes the conversion of 4-diphosphocytidyl-2-C-methyl-D-erythritol 2-phosphate (CDP-ME2P) to 2-C-methyl-D-erythritol 2,4-cyclodiphosphate (ME-CPP) with a corresponding release of cytidine 5-monophosphate (CMP). This chain is 2-C-methyl-D-erythritol 2,4-cyclodiphosphate synthase, found in Kosmotoga olearia (strain ATCC BAA-1733 / DSM 21960 / TBF 19.5.1).